Consider the following 354-residue polypeptide: Putative cinnamyl alcohol dehydrogenase 4 (354 aa).

Zn(2+) is bound by residues Cys-47, His-69, Glu-70, Cys-100, Cys-103, Cys-106, Cys-114, and Cys-163. NADP(+)-binding positions include Thr-167, 188 to 193 (GLGGLG), 211 to 216 (STSESK), Thr-251, and 297 to 299 (SVT).

Belongs to the zinc-containing alcohol dehydrogenase family. Homodimer. It depends on Zn(2+) as a cofactor.

The catalysed reaction is (E)-cinnamyl alcohol + NADP(+) = (E)-cinnamaldehyde + NADPH + H(+). It catalyses the reaction (E)-coniferol + NADP(+) = (E)-coniferaldehyde + NADPH + H(+). It carries out the reaction (E)-sinapyl alcohol + NADP(+) = (E)-sinapaldehyde + NADPH + H(+). The enzyme catalyses (E)-4-coumaroyl alcohol + NADP(+) = (E)-4-coumaraldehyde + NADPH + H(+). The catalysed reaction is (E)-caffeyl alcohol + NADP(+) = (E)-caffeyl aldehyde + NADPH + H(+). Its pathway is aromatic compound metabolism; phenylpropanoid biosynthesis. Its function is as follows. Involved in lignin biosynthesis. Catalyzes the final step specific for the production of lignin monomers. Catalyzes the NADPH-dependent reduction of coniferaldehyde, 5-hydroxyconiferaldehyde, sinapaldehyde, 4-coumaraldehyde and caffeyl aldehyde to their respective alcohols. This Oryza sativa subsp. japonica (Rice) protein is Putative cinnamyl alcohol dehydrogenase 4.